The chain runs to 397 residues: Phosphoglycerate kinase (397 aa).

Residues 21 to 23 (DFN), Arg-36, 59 to 62 (HCGR), Arg-118, and Arg-151 contribute to the substrate site. ATP contacts are provided by residues Lys-201, Glu-323, and 353–356 (GGDT).

It belongs to the phosphoglycerate kinase family. Monomer.

Its subcellular location is the cytoplasm. It carries out the reaction (2R)-3-phosphoglycerate + ATP = (2R)-3-phospho-glyceroyl phosphate + ADP. It participates in carbohydrate degradation; glycolysis; pyruvate from D-glyceraldehyde 3-phosphate: step 2/5. This is Phosphoglycerate kinase from Bartonella tribocorum (strain CIP 105476 / IBS 506).